Consider the following 335-residue polypeptide: Corrinoid adenosyltransferase PduO (335 aa).

Residue His206 participates in heme binding.

Belongs to the Cob(I)alamin adenosyltransferase family. PduO subfamily. Forms a complex with PduS. Heme b serves as cofactor. Mg(2+) is required as a cofactor.

The protein resides in the bacterial microcompartment. The catalysed reaction is cob(I)alamin-[corrinoid adenosyltransferase] + ATP = apo-[corrinoid adenosyltransferase] + adenosylcob(III)alamin + triphosphate. Its pathway is polyol metabolism; 1,2-propanediol degradation. It participates in cofactor biosynthesis; adenosylcobalamin biosynthesis. Functionally, converts cob(I)alamin to adenosylcobalamin (adenosylcob(III)alamin), the cofactor for propanediol dehydratase. Found in the bacterial microcompartment (BMC) dedicated to 1,2-propanediol (1,2-PD) degradation. PduS and PduO allow regeneration of the adenosylcobalamin cofactor within the BMC. In terms of biological role, expression of a cosmid containing the full 21-gene pdu operon in E.coli allows E.coli to grow on 1,2-propanediol (1,2-PD) with the appearance of bacterial microcompartments (BMC) in its cytoplasm. The 1,2-PD-specific bacterial microcompartment (BMC) concentrates low levels of 1,2-PD catabolic enzymes, concentrates volatile reaction intermediates thus enhancing pathway flux and keeps the level of toxic, mutagenic propionaldehyde low. This chain is Corrinoid adenosyltransferase PduO, found in Citrobacter freundii.